A 539-amino-acid polypeptide reads, in one-letter code: Dopamine receptor 2 (539 aa).

Residues 1 to 113 (MVDDNGSSPE…LPNDRVGLLA (113 aa)) are Extracellular-facing. Residues asparagine 5, asparagine 31, asparagine 47, and asparagine 68 are each glycosylated (N-linked (GlcNAc...) asparagine). The helical transmembrane segment at 114-134 (FLFLFSFATVFGNSLVILAVI) threads the bilayer. At 135 to 145 (RERYLHTATNY) the chain is on the cytoplasmic side. A helical transmembrane segment spans residues 146-166 (FITSLAVADCLVGLVVMPFSA). Residues 167–189 (LYEVLENTWFFGTDWCDIWRSLD) lie on the Extracellular side of the membrane. The cysteines at positions 182 and 261 are disulfide-linked. Residues 190-206 (VLFSTASILNLCVISLD) form a helical membrane-spanning segment. The Cytoplasmic segment spans residues 207–227 (RYWAITDPFSYPMRMTVKRAA). Residues 228-248 (GLIAAVWICSSAISFPAIVWW) form a helical membrane-spanning segment. The Extracellular segment spans residues 249–266 (RAARDGEMPAYKCTFTEH). The helical transmembrane segment at 267 to 287 (LGYLVFSSTISFYLPLLVMVF) threads the bilayer. The Cytoplasmic segment spans residues 288 to 420 (TYCRIYRAAV…FAKEKKAAKT (133 aa)). A disordered region spans residues 326 to 387 (GGTTRDQQNQ…EPDDEPLSAL (62 aa)). Positions 337-352 (SGGGGGGGGGGGGGGS) are enriched in gly residues. The span at 356–367 (SHSHSHHHHHNH) shows a compositional bias: basic residues. The helical transmembrane segment at 421–441 (LGIVMGVFIICWLPFFVVNLL) threads the bilayer. Residues 442 to 453 (SGFCIECIEHEE) lie on the Extracellular side of the membrane. The chain crosses the membrane as a helical span at residues 454–474 (IVSAIVTWLGWINSCMNPVIY). The Cytoplasmic portion of the chain corresponds to 475 to 539 (ACWSRDFRRA…RHNSCEQTYI (65 aa)). S-palmitoyl cysteine attachment occurs at residues cysteine 492 and cysteine 493.

Belongs to the G-protein coupled receptor 1 family. Expressed in both central and peripheral nervous systems.

The protein resides in the cell membrane. Functionally, receptor for dopamine. The activity of this receptor is mediated by G proteins which activate adenylyl cyclase. Also capable of generating a calcium signal. In terms of antagonist responses, would be classed with the D1-like dopamine receptor group. This receptor is an attractive candidate for initiating biochemical cascades underlying olfactory learning. This is Dopamine receptor 2 (Dop1R2) from Drosophila melanogaster (Fruit fly).